The sequence spans 294 residues: Probable endonuclease 4 (294 aa).

Residues His-71, His-111, Glu-148, Asp-182, His-185, His-217, Asp-230, His-232, and Glu-262 each contribute to the Zn(2+) site.

It belongs to the AP endonuclease 2 family. Zn(2+) is required as a cofactor.

It carries out the reaction Endonucleolytic cleavage to 5'-phosphooligonucleotide end-products.. In terms of biological role, endonuclease IV plays a role in DNA repair. It cleaves phosphodiester bonds at apurinic or apyrimidinic (AP) sites, generating a 3'-hydroxyl group and a 5'-terminal sugar phosphate. This Acholeplasma laidlawii (strain PG-8A) protein is Probable endonuclease 4.